The primary structure comprises 273 residues: 2,3,4,5-tetrahydropyridine-2,6-dicarboxylate N-succinyltransferase (273 aa).

Arg104 and Asp141 together coordinate substrate.

The protein belongs to the transferase hexapeptide repeat family. As to quaternary structure, homotrimer.

It localises to the cytoplasm. It catalyses the reaction (S)-2,3,4,5-tetrahydrodipicolinate + succinyl-CoA + H2O = (S)-2-succinylamino-6-oxoheptanedioate + CoA. It functions in the pathway amino-acid biosynthesis; L-lysine biosynthesis via DAP pathway; LL-2,6-diaminopimelate from (S)-tetrahydrodipicolinate (succinylase route): step 1/3. The polypeptide is 2,3,4,5-tetrahydropyridine-2,6-dicarboxylate N-succinyltransferase (Blochmanniella pennsylvanica (strain BPEN)).